The following is a 178-amino-acid chain: MTTILSVRVQGKVVIGGDGQATFGHTVMKSNVKKVRSIYKNQVIAGFAGGTADAFTLFELFEKKLEKYQGQLQRSAIELAKDWRTDRLLRKLEALLAVADKKNSLIITGTGDVIQPENDIIAIGSGGPYAQAAAYAYALVYNTNLKASNIVKKSLQIASNICIYTNQSFTIKEIKSEK.

T2 is a catalytic residue. Na(+)-binding residues include S159, C162, and T165.

Belongs to the peptidase T1B family. HslV subfamily. As to quaternary structure, a double ring-shaped homohexamer of HslV is capped on each side by a ring-shaped HslU homohexamer. The assembly of the HslU/HslV complex is dependent on binding of ATP.

It is found in the cytoplasm. It carries out the reaction ATP-dependent cleavage of peptide bonds with broad specificity.. Its activity is regulated as follows. Allosterically activated by HslU binding. Protease subunit of a proteasome-like degradation complex believed to be a general protein degrading machinery. This Buchnera aphidicola subsp. Cinara cedri (strain Cc) protein is ATP-dependent protease subunit HslV.